The primary structure comprises 291 residues: MNAVTSANNNTDNRRLRLDVVSIFPEYLDPLRHALLGKAIEDGYLEVGVHDLRDWATGGHKAVDDTPYGGGPGMVMKPEVWGPALDDVAAGRVAGWELESATPHRNVARHDELAGVDKHAYEGEDADLPLLLVPTPAGKPFTQADAQAWSNENHIVFACGRYEGIDQRVIEDARNRYRVREVSIGDYVLIGGEVAVLVIAEAVVRLIPGVLGNRRSHEEDSFSDGLLEGPSYTKPRTWRGLDVPEVLFSGNHARVDRWRRDQALLRTQRVRPELLDAVELTTEDRKVLGLD.

Residues Gly160 and 184 to 189 (IGDYVL) each bind S-adenosyl-L-methionine.

The protein belongs to the RNA methyltransferase TrmD family. As to quaternary structure, homodimer.

It localises to the cytoplasm. It carries out the reaction guanosine(37) in tRNA + S-adenosyl-L-methionine = N(1)-methylguanosine(37) in tRNA + S-adenosyl-L-homocysteine + H(+). Functionally, specifically methylates guanosine-37 in various tRNAs. The polypeptide is tRNA (guanine-N(1)-)-methyltransferase (Corynebacterium efficiens (strain DSM 44549 / YS-314 / AJ 12310 / JCM 11189 / NBRC 100395)).